The following is a 458-amino-acid chain: Ribosomal protein uS12 methylthiotransferase RimO (458 aa).

The region spanning P26 to P136 is the MTTase N-terminal domain. Residues C35, C71, C100, C167, C171, and C174 each coordinate [4Fe-4S] cluster. Residues L153–A389 enclose the Radical SAM core domain. The TRAM domain maps to Q392–T458.

It belongs to the methylthiotransferase family. RimO subfamily. Requires [4Fe-4S] cluster as cofactor.

Its subcellular location is the cytoplasm. It carries out the reaction L-aspartate(89)-[ribosomal protein uS12]-hydrogen + (sulfur carrier)-SH + AH2 + 2 S-adenosyl-L-methionine = 3-methylsulfanyl-L-aspartate(89)-[ribosomal protein uS12]-hydrogen + (sulfur carrier)-H + 5'-deoxyadenosine + L-methionine + A + S-adenosyl-L-homocysteine + 2 H(+). Catalyzes the methylthiolation of an aspartic acid residue of ribosomal protein uS12. The polypeptide is Ribosomal protein uS12 methylthiotransferase RimO (Jannaschia sp. (strain CCS1)).